The primary structure comprises 87 residues: Beta-defensin 109C (87 aa).

Residues 1 to 22 form the signal peptide; it reads MRLHLLLLILLLFSILLSPVRG. Intrachain disulfides connect Cys-31–Cys-59, Cys-38–Cys-53, and Cys-43–Cys-60.

Belongs to the beta-defensin family.

It localises to the secreted. Its function is as follows. Has antibacterial activity. In Homo sapiens (Human), this protein is Beta-defensin 109C (DEFB109C).